We begin with the raw amino-acid sequence, 376 residues long: Alcohol dehydrogenase 1 (376 aa).

Position 2 is an N-acetylserine (Ser-2). Residues Cys-47, His-68, Cys-98, Cys-101, Cys-104, Cys-112, and Cys-176 each coordinate Zn(2+). NAD(+) contacts are provided by residues 201–206 (GLGGVG), Asp-225, and Lys-230. Lys-235 carries the N6-succinyllysine modification. NAD(+) is bound at residue 294 to 296 (VGV). At Lys-341 the chain carries N6-succinyllysine. Arg-371 is an NAD(+) binding site.

This sequence belongs to the zinc-containing alcohol dehydrogenase family. Class-I subfamily. In terms of assembly, dimer of identical or non-identical chains of three types (A, B, C), which are coded by 3 separate genes at different loci. Zn(2+) serves as cofactor.

Its subcellular location is the cytoplasm. It carries out the reaction a primary alcohol + NAD(+) = an aldehyde + NADH + H(+). The catalysed reaction is a secondary alcohol + NAD(+) = a ketone + NADH + H(+). The sequence is that of Alcohol dehydrogenase 1 (Adh1) from Rattus norvegicus (Rat).